The primary structure comprises 434 residues: Alpha-enolase (434 aa).

S2 is subject to N-acetylserine. S40 provides a ligand contact to Mg(2+). A Phosphotyrosine modification is found at Y44. An N6-acetyllysine; alternate modification is found at K60. The residue at position 60 (K60) is an N6-succinyllysine; alternate. N6-acetyllysine is present on K71. Residue K89 is modified to N6-acetyllysine; alternate. At K89 the chain carries N6-succinyllysine; alternate. N6-acetyllysine is present on residues K92 and K126. Substrate contacts are provided by H158 and E167. An N6-acetyllysine mark is found at K193 and K199. K202 carries the post-translational modification N6-acetyllysine; alternate. Residue K202 forms a Glycyl lysine isopeptide (Lys-Gly) (interchain with G-Cter in SUMO2); alternate linkage. E210 (proton donor) is an active-site residue. 2 positions are modified to N6-acetyllysine; alternate: K228 and K233. N6-succinyllysine; alternate is present on K228. K228 bears the N6-(2-hydroxyisobutyryl)lysine; alternate mark. Position 233 is an N6-malonyllysine; alternate (K233). Residue D245 coordinates Mg(2+). Position 254 is a phosphoserine (S254). The residue at position 256 (K256) is an N6-acetyllysine. S263 is subject to Phosphoserine. K281 carries the N6-acetyllysine; alternate modification. K281 is modified (N6-(2-hydroxyisobutyryl)lysine; alternate). Position 287 is a phosphotyrosine (Y287). The residue at position 291 (S291) is a Phosphoserine. 2 residues coordinate Mg(2+): E293 and D318. Residues E293 and D318 each coordinate substrate. N6-acetyllysine occurs at positions 335 and 343. The active-site Proton acceptor is K343. Residues 370–373 (SHRS) and K394 each bind substrate. Positions 405 to 434 (AKYNQILRIEEELGSKAKFAGRSFRNPLAK) are required for interaction with PLG. An N6-acetyllysine modification is found at K406. Position 420 is an N6-acetyllysine; alternate (K420). K420 bears the N6-succinyllysine; alternate mark. N6-malonyllysine; alternate is present on K420.

It belongs to the enolase family. In terms of assembly, mammalian enolase is composed of 3 isozyme subunits, alpha, beta and gamma, which can form homodimers or heterodimers which are cell-type and development-specific. ENO1 interacts with PLG in the neuronal plasma membrane and promotes its activation. The C-terminal lysine is required for this binding. In vitro, interacts with several glycolytic enzymes including PKM, PGM, CKM and aldolase. Also binds troponin, in vitro. Interacts with ENO4 and PGAM2. Interacts with CMTM6. Mg(2+) is required as a cofactor. In terms of processing, ISGylated. Post-translationally, lysine 2-hydroxyisobutyrylation (Khib) by p300/EP300 activates the phosphopyruvate hydratase activity. As to expression, testis. Found in the principal piece of sperm tail (at protein level). The alpha/alpha homodimer is expressed in embryo and in most adult tissues. The alpha/beta heterodimer and the beta/beta homodimer are found in striated muscle, and the alpha/gamma heterodimer and the gamma/gamma homodimer in neurons. In striated muscle, expression of ENO1 appears to be independent of fiber type.

It localises to the cytoplasm. It is found in the cell membrane. It carries out the reaction (2R)-2-phosphoglycerate = phosphoenolpyruvate + H2O. It participates in carbohydrate degradation; glycolysis; pyruvate from D-glyceraldehyde 3-phosphate: step 4/5. Glycolytic enzyme the catalyzes the conversion of 2-phosphoglycerate to phosphoenolpyruvate. In addition to glycolysis, involved in various processes such as growth control, hypoxia tolerance and allergic responses. May also function in the intravascular and pericellular fibrinolytic system due to its ability to serve as a receptor and activator of plasminogen on the cell surface of several cell-types such as leukocytes and neurons. Stimulates immunoglobulin production. In Mus musculus (Mouse), this protein is Alpha-enolase (Eno1).